We begin with the raw amino-acid sequence, 141 residues long: Large ribosomal subunit protein uL11 (141 aa).

Belongs to the universal ribosomal protein uL11 family. Part of the ribosomal stalk of the 50S ribosomal subunit. Interacts with L10 and the large rRNA to form the base of the stalk. L10 forms an elongated spine to which L12 dimers bind in a sequential fashion forming a multimeric L10(L12)X complex. One or more lysine residues are methylated.

Its function is as follows. Forms part of the ribosomal stalk which helps the ribosome interact with GTP-bound translation factors. The chain is Large ribosomal subunit protein uL11 from Exiguobacterium sibiricum (strain DSM 17290 / CCUG 55495 / CIP 109462 / JCM 13490 / 255-15).